A 140-amino-acid chain; its full sequence is Small ribosomal subunit protein uS12 (140 aa).

D102 carries the 3-methylthioaspartic acid modification.

The protein belongs to the universal ribosomal protein uS12 family. Part of the 30S ribosomal subunit. Contacts proteins S8 and S17. May interact with IF1 in the 30S initiation complex.

With S4 and S5 plays an important role in translational accuracy. Its function is as follows. Interacts with and stabilizes bases of the 16S rRNA that are involved in tRNA selection in the A site and with the mRNA backbone. Located at the interface of the 30S and 50S subunits, it traverses the body of the 30S subunit contacting proteins on the other side and probably holding the rRNA structure together. The combined cluster of proteins S8, S12 and S17 appears to hold together the shoulder and platform of the 30S subunit. This chain is Small ribosomal subunit protein uS12, found in Bacillus cytotoxicus (strain DSM 22905 / CIP 110041 / 391-98 / NVH 391-98).